Reading from the N-terminus, the 394-residue chain is Probable dual specificity protein phosphatase DDB_G0281963 (394 aa).

The region spanning 2–142 (NDVSRIFPGF…LKKYELILKK (141 aa)) is the Tyrosine-protein phosphatase domain. C86 functions as the Phosphocysteine intermediate in the catalytic mechanism. A disordered region spans residues 147 to 191 (PQIVEKESEEEDDDEDDDDDDYDSDEDDDDDSEDDDFEEEFDNVV). Acidic residues predominate over residues 153–188 (ESEEEDDDEDDDDDDYDSDEDDDDDSEDDDFEEEFD).

It belongs to the protein-tyrosine phosphatase family. Non-receptor class dual specificity subfamily.

It catalyses the reaction O-phospho-L-tyrosyl-[protein] + H2O = L-tyrosyl-[protein] + phosphate. It carries out the reaction O-phospho-L-seryl-[protein] + H2O = L-seryl-[protein] + phosphate. The enzyme catalyses O-phospho-L-threonyl-[protein] + H2O = L-threonyl-[protein] + phosphate. Its function is as follows. Has a dual specificity toward Ser/Thr and Tyr-containing proteins. This Dictyostelium discoideum (Social amoeba) protein is Probable dual specificity protein phosphatase DDB_G0281963.